We begin with the raw amino-acid sequence, 272 residues long: Probable proteasome subunit alpha type-6 (272 aa).

Over residues 243–261 (AARASRAAAEEPQAPTAEA) the composition is skewed to low complexity. The tract at residues 243–272 (AARASRAAAEEPQAPTAEAILDSADAMETD) is disordered.

This sequence belongs to the peptidase T1A family. As to quaternary structure, the 26S proteasome consists of a 20S proteasome core and two 19S regulatory subunits. The 20S proteasome core is composed of 28 subunits that are arranged in four stacked rings, resulting in a barrel-shaped structure. The two end rings are each formed by seven alpha subunits, and the two central rings are each formed by seven beta subunits. The catalytic chamber with the active sites is on the inside of the barrel.

It localises to the cytoplasm. It is found in the nucleus. In terms of biological role, the proteasome is a multicatalytic proteinase complex which is characterized by its ability to cleave peptides with Arg, Phe, Tyr, Leu, and Glu adjacent to the leaving group at neutral or slightly basic pH. The proteasome has an ATP-dependent proteolytic activity. This is Probable proteasome subunit alpha type-6 from Schizosaccharomyces pombe (strain 972 / ATCC 24843) (Fission yeast).